The chain runs to 390 residues: Lipid-A-disaccharide synthase (390 aa).

This sequence belongs to the LpxB family.

It catalyses the reaction a lipid X + a UDP-2-N,3-O-bis[(3R)-3-hydroxyacyl]-alpha-D-glucosamine = a lipid A disaccharide + UDP + H(+). The protein operates within bacterial outer membrane biogenesis; LPS lipid A biosynthesis. Functionally, condensation of UDP-2,3-diacylglucosamine and 2,3-diacylglucosamine-1-phosphate to form lipid A disaccharide, a precursor of lipid A, a phosphorylated glycolipid that anchors the lipopolysaccharide to the outer membrane of the cell. In Haemophilus influenzae (strain PittEE), this protein is Lipid-A-disaccharide synthase.